Here is a 116-residue protein sequence, read N- to C-terminus: Large ribosomal subunit protein bL17 (116 aa).

It belongs to the bacterial ribosomal protein bL17 family. In terms of assembly, part of the 50S ribosomal subunit. Contacts protein L32.

The chain is Large ribosomal subunit protein bL17 from Prochlorococcus marinus (strain MIT 9312).